A 200-amino-acid polypeptide reads, in one-letter code: Late embryogenesis abundant protein 19 (200 aa).

Disordered regions lie at residues 1-145 (MASH…KTGS) and 172-200 (TEDEAGTDDGANKDTSATAAATETTARDH). Basic and acidic residues-rich tracts occupy residues 13-23 (GETKAHTEEKA), 30-42 (SKDKASEAKDRAS), 53-81 (QDTKEATKEKAQAAKERASETAQAAKDKT), 88-97 (ARDKAAESKD), and 105-114 (EKTEQAKQKA). Positions 52 to 81 (GQDTKEATKEKAQAAKERASETAQAAKDKT) form a coiled coil. Low complexity-rich tracts occupy residues 115–130 (AETAGAAKQKTAETAQ) and 186–200 (TSATAAATETTARDH).

This sequence belongs to the LEA type 4 family.

Functionally, involved in response to stress. The chain is Late embryogenesis abundant protein 19 from Oryza sativa subsp. japonica (Rice).